Here is a 329-residue protein sequence, read N- to C-terminus: Ribosomal protein L11 methyltransferase (329 aa).

The S-adenosyl-L-methionine site is built by threonine 177, glycine 198, aspartate 220, and asparagine 264.

This sequence belongs to the methyltransferase superfamily. PrmA family.

It is found in the cytoplasm. The enzyme catalyses L-lysyl-[protein] + 3 S-adenosyl-L-methionine = N(6),N(6),N(6)-trimethyl-L-lysyl-[protein] + 3 S-adenosyl-L-homocysteine + 3 H(+). Functionally, methylates ribosomal protein L11. The polypeptide is Ribosomal protein L11 methyltransferase (Helicobacter pylori (strain Shi470)).